Here is a 64-residue protein sequence, read N- to C-terminus: Large ribosomal subunit protein bL33 (64 aa).

This sequence belongs to the bacterial ribosomal protein bL33 family.

The protein is Large ribosomal subunit protein bL33 of Rippkaea orientalis (strain PCC 8801 / RF-1) (Cyanothece sp. (strain PCC 8801)).